Here is a 420-residue protein sequence, read N- to C-terminus: Glutamyl-tRNA reductase (420 aa).

Residues 49 to 52, S109, 114 to 116, and Q120 contribute to the substrate site; these read TCNR and EPQ. The active-site Nucleophile is the C50. 189–194 contributes to the NADP(+) binding site; the sequence is GAGETI.

Belongs to the glutamyl-tRNA reductase family. Homodimer.

It catalyses the reaction (S)-4-amino-5-oxopentanoate + tRNA(Glu) + NADP(+) = L-glutamyl-tRNA(Glu) + NADPH + H(+). It participates in porphyrin-containing compound metabolism; protoporphyrin-IX biosynthesis; 5-aminolevulinate from L-glutamyl-tRNA(Glu): step 1/2. Catalyzes the NADPH-dependent reduction of glutamyl-tRNA(Glu) to glutamate 1-semialdehyde (GSA). The protein is Glutamyl-tRNA reductase of Edwardsiella ictaluri (strain 93-146).